The primary structure comprises 373 residues: Phospho-N-acetylmuramoyl-pentapeptide-transferase (373 aa).

Helical transmembrane passes span 28 to 48, 72 to 92, 94 to 114, 135 to 155, 177 to 197, 212 to 232, 252 to 272, 276 to 296, 301 to 321, and 350 to 370; these read LLTVITSLAFSIILGPRTIAY, TPTMGGVLILTSIGFSTLCWA, LANPYVWILMVVMVIFGAVGW, YFWLSVGALFVGSSLYYIASQ, IVPLSALPLGLGFIIFTYFVI, GLAILPVVFVAAGLGVFSYVS, VTIVCAAMIGSGLGFLWYNAH, VFMGDVGALALGAMLGTIAVM, IAFAIMGGLFVAEALSVILQV, and QVVVRFWIIAILLVVLGLMTL.

Belongs to the glycosyltransferase 4 family. MraY subfamily. Requires Mg(2+) as cofactor.

It localises to the cell inner membrane. It catalyses the reaction UDP-N-acetyl-alpha-D-muramoyl-L-alanyl-gamma-D-glutamyl-meso-2,6-diaminopimeloyl-D-alanyl-D-alanine + di-trans,octa-cis-undecaprenyl phosphate = di-trans,octa-cis-undecaprenyl diphospho-N-acetyl-alpha-D-muramoyl-L-alanyl-D-glutamyl-meso-2,6-diaminopimeloyl-D-alanyl-D-alanine + UMP. It participates in cell wall biogenesis; peptidoglycan biosynthesis. In terms of biological role, catalyzes the initial step of the lipid cycle reactions in the biosynthesis of the cell wall peptidoglycan: transfers peptidoglycan precursor phospho-MurNAc-pentapeptide from UDP-MurNAc-pentapeptide onto the lipid carrier undecaprenyl phosphate, yielding undecaprenyl-pyrophosphoryl-MurNAc-pentapeptide, known as lipid I. This is Phospho-N-acetylmuramoyl-pentapeptide-transferase from Psychrobacter sp. (strain PRwf-1).